A 329-amino-acid chain; its full sequence is 4-hydroxythreonine-4-phosphate dehydrogenase (329 aa).

Substrate is bound by residues His136 and Thr137. A divalent metal cation-binding residues include His166, His211, and His266. Lys274, Asn283, and Arg292 together coordinate substrate.

This sequence belongs to the PdxA family. In terms of assembly, homodimer. Zn(2+) is required as a cofactor. It depends on Mg(2+) as a cofactor. Co(2+) serves as cofactor.

The protein resides in the cytoplasm. The enzyme catalyses 4-(phosphooxy)-L-threonine + NAD(+) = 3-amino-2-oxopropyl phosphate + CO2 + NADH. It participates in cofactor biosynthesis; pyridoxine 5'-phosphate biosynthesis; pyridoxine 5'-phosphate from D-erythrose 4-phosphate: step 4/5. Catalyzes the NAD(P)-dependent oxidation of 4-(phosphooxy)-L-threonine (HTP) into 2-amino-3-oxo-4-(phosphooxy)butyric acid which spontaneously decarboxylates to form 3-amino-2-oxopropyl phosphate (AHAP). The chain is 4-hydroxythreonine-4-phosphate dehydrogenase from Neisseria meningitidis serogroup A / serotype 4A (strain DSM 15465 / Z2491).